A 267-amino-acid polypeptide reads, in one-letter code: MAGQAPTAVPGSVTGEVSRWQNLGPAQPAQKVAQPQNLVPDGHLEKALEGSDLLQKLGGFHIAIAFAHLAFGGYLISTVKNLHLVVLKCWYPLWGTVSFLVAGMAAMTTVTFPKTSLKVLCVIANVISLFCALAGFFVIAKDLFLEGPFPWPIWRPYPEPTTYIQRLELTLFCFTFLEIFLSGSTAITAYRMKRLQAEDKDDTPFVPDTPMELKGLSLGPPPSYKDVAQGHSSSDTGRALATSSGLLLASDSFHQALLHTGPRTLRK.

Residues 1–56 (MAGQAPTAVPGSVTGEVSRWQNLGPAQPAQKVAQPQNLVPDGHLEKALEGSDLLQK) lie on the Cytoplasmic side of the membrane. The helical transmembrane segment at 57-77 (LGGFHIAIAFAHLAFGGYLIS) threads the bilayer. Residues 78 to 83 (TVKNLH) are Extracellular-facing. Residues 84–104 (LVVLKCWYPLWGTVSFLVAGM) form a helical membrane-spanning segment. The Cytoplasmic portion of the chain corresponds to 105 to 118 (AAMTTVTFPKTSLK). Residues 119–139 (VLCVIANVISLFCALAGFFVI) traverse the membrane as a helical segment. The Extracellular portion of the chain corresponds to 140 to 168 (AKDLFLEGPFPWPIWRPYPEPTTYIQRLE). Residues 169 to 189 (LTLFCFTFLEIFLSGSTAITA) traverse the membrane as a helical segment. At 190–267 (YRMKRLQAED…LHTGPRTLRK (78 aa)) the chain is on the cytoplasmic side.

The protein belongs to the MS4A family. Expressed in thymus, kidney, colon, brain and testis. Expressed also by various hematopoietic and lymphoblastoid cell lines.

It is found in the membrane. Functionally, may be involved in signal transduction as a component of a multimeric receptor complex. The protein is Membrane-spanning 4-domains subfamily A member 10 (Ms4a10) of Mus musculus (Mouse).